We begin with the raw amino-acid sequence, 480 residues long: UDP-glucose 6-dehydrogenase 4 (480 aa).

Residues 3 to 20 (KICC…MAVI), Asp-33, Arg-38, Thr-90, Thr-128, and Glu-161 contribute to the NAD(+) site. Substrate contacts are provided by residues 157 to 161 (EFLAE), Lys-216, 216 to 223 (KLAANAFL), 256 to 269 (RIGS…VGFG), and Gly-269. Cys-272 acts as the Nucleophile in catalysis. Lys-275 contributes to the NAD(+) binding site. Substrate-binding residues include Phe-334 and Lys-335. Arg-342 provides a ligand contact to NAD(+). Arg-447 provides a ligand contact to substrate.

This sequence belongs to the UDP-glucose/GDP-mannose dehydrogenase family.

It carries out the reaction UDP-alpha-D-glucose + 2 NAD(+) + H2O = UDP-alpha-D-glucuronate + 2 NADH + 3 H(+). The protein operates within nucleotide-sugar biosynthesis; UDP-alpha-D-glucuronate biosynthesis; UDP-alpha-D-glucuronate from UDP-alpha-D-glucose: step 1/1. Its activity is regulated as follows. Inhibited by UDP-xylose. Functionally, involved in the biosynthesis of UDP-glucuronic acid (UDP-GlcA), providing nucleotide sugars for cell-wall polymers. The polypeptide is UDP-glucose 6-dehydrogenase 4 (Arabidopsis thaliana (Mouse-ear cress)).